The sequence spans 55 residues: Large ribosomal subunit protein bL33 (55 aa).

This sequence belongs to the bacterial ribosomal protein bL33 family.

The polypeptide is Large ribosomal subunit protein bL33 (Agrobacterium fabrum (strain C58 / ATCC 33970) (Agrobacterium tumefaciens (strain C58))).